The following is a 197-amino-acid chain: Probable nicotinate-nucleotide adenylyltransferase (197 aa).

This sequence belongs to the NadD family.

The catalysed reaction is nicotinate beta-D-ribonucleotide + ATP + H(+) = deamido-NAD(+) + diphosphate. It participates in cofactor biosynthesis; NAD(+) biosynthesis; deamido-NAD(+) from nicotinate D-ribonucleotide: step 1/1. Functionally, catalyzes the reversible adenylation of nicotinate mononucleotide (NaMN) to nicotinic acid adenine dinucleotide (NaAD). The polypeptide is Probable nicotinate-nucleotide adenylyltransferase (Bordetella parapertussis (strain 12822 / ATCC BAA-587 / NCTC 13253)).